A 169-amino-acid chain; its full sequence is Ribosome maturation factor RimM (169 aa).

Positions 94-166 (EEGFYDHELE…TATITPPDGL (73 aa)) constitute a PRC barrel domain.

The protein belongs to the RimM family. As to quaternary structure, binds ribosomal protein uS19.

Its subcellular location is the cytoplasm. Functionally, an accessory protein needed during the final step in the assembly of 30S ribosomal subunit, possibly for assembly of the head region. Essential for efficient processing of 16S rRNA. May be needed both before and after RbfA during the maturation of 16S rRNA. It has affinity for free ribosomal 30S subunits but not for 70S ribosomes. The sequence is that of Ribosome maturation factor RimM from Corynebacterium efficiens (strain DSM 44549 / YS-314 / AJ 12310 / JCM 11189 / NBRC 100395).